We begin with the raw amino-acid sequence, 112 residues long: MGNTMCPKMESAFSLLGKRWNGLIIHVLMDGPKRFKEITETIPMISQKMLAERLKELEQNEIVERQVLPETPVKVIYTLTEKGTALQAVFQEMQAWADQFCEPGDTVCEEEK.

One can recognise an HTH hxlR-type domain in the interval 6–105; the sequence is CPKMESAFSL…WADQFCEPGD (100 aa).

Functionally, negatively regulates yodC and azoR1 which may contribute to the degradation of aromatic compounds. Probably positively regulates the catechol-specific transcription of mhqNOP, mhqED, and mhqA. The polypeptide is HTH-type transcriptional regulator YodB (yodB) (Bacillus subtilis (strain 168)).